Consider the following 532-residue polypeptide: tRNA-2-methylthio-N(6)-dimethylallyladenosine synthase (532 aa).

Residues Met-1–Met-21 are disordered. Residues Arg-24–His-140 enclose the MTTase N-terminal domain. Residues Cys-33, Cys-69, Cys-103, Cys-177, Cys-181, and Cys-184 each contribute to the [4Fe-4S] cluster site. A Radical SAM core domain is found at Arg-163–Glu-399. The TRAM domain maps to Arg-402–Ile-470. Residues Thr-510–Gln-532 form a disordered region. The segment covering Gly-523–Gln-532 has biased composition (low complexity).

It belongs to the methylthiotransferase family. MiaB subfamily. As to quaternary structure, monomer. [4Fe-4S] cluster serves as cofactor.

It is found in the cytoplasm. It carries out the reaction N(6)-dimethylallyladenosine(37) in tRNA + (sulfur carrier)-SH + AH2 + 2 S-adenosyl-L-methionine = 2-methylsulfanyl-N(6)-dimethylallyladenosine(37) in tRNA + (sulfur carrier)-H + 5'-deoxyadenosine + L-methionine + A + S-adenosyl-L-homocysteine + 2 H(+). Catalyzes the methylthiolation of N6-(dimethylallyl)adenosine (i(6)A), leading to the formation of 2-methylthio-N6-(dimethylallyl)adenosine (ms(2)i(6)A) at position 37 in tRNAs that read codons beginning with uridine. This Mycobacterium ulcerans (strain Agy99) protein is tRNA-2-methylthio-N(6)-dimethylallyladenosine synthase.